We begin with the raw amino-acid sequence, 150 residues long: uncharacterized protein (150 aa).

3 helical membrane-spanning segments follow: residues 50-70 (VVSV…VIHL), 80-100 (LYIT…QLWL), and 127-147 (KVVI…FFIE).

The protein localises to the membrane. This is an uncharacterized protein from Schizosaccharomyces pombe (strain 972 / ATCC 24843) (Fission yeast).